A 418-amino-acid chain; its full sequence is Putative ion-transport protein YfeO (418 aa).

12 helical membrane-spanning segments follow: residues 10–30 (LLLSLPAVAIGIASSLILIVV), 54–74 (DSPFWIIAILTLTGIAVGLVI), 99–119 (ALPGLIVALILGLAGGVSLGP), 120–140 (EHPIMTVNIALAVAIGARLLP), 149–169 (ILASAGTIGALFGTPVAAALI), 186–206 (LFAPLMAAAAGALTTGLFFHP), 223–243 (ILSGAIVAAIAIAAGMIAVWC), 258–278 (VLMLGVGGFILGILGVIAGPV), 300–320 (DYFLLAVIKLAALVVAAASGF), 322–342 (GGRIFPAVFVGVALGLMLHEH), 343–363 (VPAVPAAITVSCAILGIVLVV), and 371–391 (LFMAAVVVPNTTLLPLLCIVM).

It belongs to the chloride channel (TC 2.A.49) family.

Its subcellular location is the cell membrane. The polypeptide is Putative ion-transport protein YfeO (Escherichia coli O7:K1 (strain IAI39 / ExPEC)).